A 155-amino-acid polypeptide reads, in one-letter code: Lipoprotein signal peptidase (155 aa).

The next 4 helical transmembrane spans lie at 7–27, 39–59, 63–83, and 96–116; these read WFWIVAVIGLILDQVTKYITV, IIPGVFHFTYVINTGAAFSAF, VGWLKWLSLLVSLGLMAFAYF, and GFILAGAFGNGIDRFLFGYVV. Catalysis depends on residues aspartate 117 and aspartate 133. A helical transmembrane segment spans residues 126–146; it reads FPVFNLADVFINIGIICLLIS.

The protein belongs to the peptidase A8 family.

It is found in the cell inner membrane. It carries out the reaction Release of signal peptides from bacterial membrane prolipoproteins. Hydrolyzes -Xaa-Yaa-Zaa-|-(S,diacylglyceryl)Cys-, in which Xaa is hydrophobic (preferably Leu), and Yaa (Ala or Ser) and Zaa (Gly or Ala) have small, neutral side chains.. Its pathway is protein modification; lipoprotein biosynthesis (signal peptide cleavage). In terms of biological role, this protein specifically catalyzes the removal of signal peptides from prolipoproteins. The chain is Lipoprotein signal peptidase from Microcystis aeruginosa (strain NIES-843 / IAM M-2473).